A 117-amino-acid polypeptide reads, in one-letter code: Immunity protein BC_0921 (117 aa).

In terms of assembly, probably interacts with cognate toxin BC_0920 but not with other non-cognate toxins. The interaction inhibits the toxic activity of BC_0920.

It localises to the cytoplasm. Functionally, immunity component of an LXG toxin-immunity module. Neutralizes the RNase activity of cognate toxin BC_0920. Probably does not have immunity protein activity on other toxins with the LXG domain. This chain is Immunity protein BC_0921, found in Bacillus cereus (strain ATCC 14579 / DSM 31 / CCUG 7414 / JCM 2152 / NBRC 15305 / NCIMB 9373 / NCTC 2599 / NRRL B-3711).